The sequence spans 273 residues: 1,4-dihydroxy-2-naphthoyl-CoA synthase (273 aa).

Substrate is bound by residues R34, 73-77 (SGGDQ), Y85, 117-121 (YAVGG), T143, S149, Y246, and K261. 142–144 (QTG) is a hydrogencarbonate binding site. Over residues 254–265 (GRDAFKEKRDPD) the composition is skewed to basic and acidic residues. Residues 254 to 273 (GRDAFKEKRDPDFDQFPKFP) form a disordered region.

The protein belongs to the enoyl-CoA hydratase/isomerase family. MenB subfamily. Hydrogencarbonate is required as a cofactor.

The enzyme catalyses 2-succinylbenzoyl-CoA + H(+) = 1,4-dihydroxy-2-naphthoyl-CoA + H2O. The protein operates within quinol/quinone metabolism; 1,4-dihydroxy-2-naphthoate biosynthesis; 1,4-dihydroxy-2-naphthoate from chorismate: step 6/7. Its pathway is quinol/quinone metabolism; menaquinone biosynthesis. In terms of biological role, converts o-succinylbenzoyl-CoA (OSB-CoA) to 1,4-dihydroxy-2-naphthoyl-CoA (DHNA-CoA). In Staphylococcus aureus (strain MRSA252), this protein is 1,4-dihydroxy-2-naphthoyl-CoA synthase.